We begin with the raw amino-acid sequence, 127 residues long: MPRPKKCRRVGFIPGNACFHPEIKSQVQVVLSIEEVEAIRLADYLAIGQDGAAESMNISRGTFQRIINSARKKMADALIHGKTIRIDGGNYQVESGRSCCRRQSGECRTVNCDRCTGCMDCHKSTNI.

This sequence belongs to the UPF0251 family.

This chain is UPF0251 protein Ccel_0627, found in Ruminiclostridium cellulolyticum (strain ATCC 35319 / DSM 5812 / JCM 6584 / H10) (Clostridium cellulolyticum).